The chain runs to 148 residues: Endoribonuclease YbeY (148 aa).

Zn(2+) contacts are provided by His102, His106, and His112.

This sequence belongs to the endoribonuclease YbeY family. Zn(2+) is required as a cofactor.

It localises to the cytoplasm. Its function is as follows. Single strand-specific metallo-endoribonuclease involved in late-stage 70S ribosome quality control and in maturation of the 3' terminus of the 16S rRNA. The polypeptide is Endoribonuclease YbeY (Phytoplasma mali (strain AT)).